The sequence spans 1468 residues: Potassium channel K2 (1468 aa).

The next 6 helical transmembrane spans lie at 48-68 (MIYI…YWIY), 146-165 (FNCY…WYIS), 185-209 (IYIY…IISY), 221-240 (LLID…RHFF), 246-264 (IDIY…FLNV), and 285-306 (IILG…IQGI). An intramembrane region (pore-forming) is located at residues 326-344 (YFYFSIISISTVGYGDIIP). A helical membrane pass occupies residues 351–368 (VICIFFIFWTFIWVPIQF). The segment at 804–823 (TCARTNESHKNNRLRSRRSQ) is disordered. Positions 814–823 (NNRLRSRRSQ) are enriched in basic residues. The stretch at 1141–1185 (KSNKNSNNNNKCEQIKQLNNNLTFKKNEKKTKSNKQNTNDTLERR) forms a coiled coil.

The protein localises to the membrane. May be involved in transmembrane potassium transport at the subcellular level not affecting bulk potassium transport across the plasma membrane. This Plasmodium berghei (strain Anka) protein is Potassium channel K2.